The primary structure comprises 382 residues: Putative acetyl-CoA C-acetyltransferase VraB (382 aa).

Residue Cys-86 is the Acyl-thioester intermediate of the active site. His-338 (proton acceptor) is an active-site residue.

The protein belongs to the thiolase-like superfamily. Thiolase family.

This is Putative acetyl-CoA C-acetyltransferase VraB (vraB) from Staphylococcus epidermidis (strain ATCC 35984 / DSM 28319 / BCRC 17069 / CCUG 31568 / BM 3577 / RP62A).